Reading from the N-terminus, the 1249-residue chain is Nuclear envelope pore membrane protein POM 121 (1249 aa).

The span at 1–10 (MSPAAAAAGA) shows a compositional bias: low complexity. Residues 1–27 (MSPAAAAAGAGERRRPIASVRDGRGRG) form a disordered region. The tract at residues 1 to 34 (MSPAAAAAGAGERRRPIASVRDGRGRGCGGPARA) is cisternal side. The interval 1–285 (MSPAAAAAGA…APPDRRFSRS (285 aa)) is required for targeting to the nucleus and nuclear pore complex. The span at 11-25 (GERRRPIASVRDGRG) shows a compositional bias: basic and acidic residues. Residues 35-55 (VLLGLSLVGLLLYLVPAAAAL) form a helical membrane-spanning segment. A pore side region spans residues 56–1249 (AWLTVGATAA…QARRQHTRKK (1194 aa)). Ser94 carries the phosphoserine modification. Disordered stretches follow at residues 136–220 (LMGS…CGTL), 319–530 (KEKK…LGYS), 602–776 (KKMQ…PVFS), 959–986 (PLPS…AKPA), and 1226–1249 (IGAG…TRKK). A compositionally biased stretch (pro residues) spans 168–190 (ARPAPRSPPPRSPPPRSPPPSPP). Ser345, Ser351, Ser371, Ser393, and Ser396 each carry phosphoserine. Residues 405–423 (IPSSSRNAITSSYSSTRGI) are compositionally biased toward polar residues. Residues 432-445 (PSSSPFSSPASSRS) are compositionally biased toward low complexity. Basic and acidic residues-rich tracts occupy residues 450 to 462 (RPAK…ELCH) and 472 to 486 (ADRE…DTTP). Positions 491–502 (NSNSQSTPGSSG) are enriched in polar residues. Residues 635-652 (PPLGLSQSGPPGLLPSPS) show a composition bias toward low complexity. Polar residues predominate over residues 683–696 (QAETATKPQATSAP). Low complexity-rich tracts occupy residues 712-726 (SPSS…SAPP) and 749-770 (SVTA…TAPT). Residues 1239–1249 (LQARRQHTRKK) are compositionally biased toward basic residues.

The protein belongs to the POM121 family.

The protein localises to the nucleus. It is found in the nuclear pore complex. It localises to the nucleus membrane. The protein resides in the endoplasmic reticulum membrane. Essential component of the nuclear pore complex (NPC). The repeat-containing domain may be involved in anchoring components of the pore complex to the pore membrane. When overexpressed in cells induces the formation of cytoplasmic annulate lamellae (AL). The sequence is that of Nuclear envelope pore membrane protein POM 121 (POM121) from Homo sapiens (Human).